The primary structure comprises 155 residues: MGLKLLESRLCLLLSLGLVLMLASCQPPTPSQWFEIQHIYNRAYPRCNDAMRHRNRFTGHCKDINTFLHTSFASVVGVCGNRNIPCGNRTYRNCHNSRYRVSITFCNLTTPARIYTQCRYQTTRSRKFYTVGCDPRTPRDSPMYPVVPVHLDRIF.

The first 25 residues, 1-25 (MGLKLLESRLCLLLSLGLVLMLASC), serve as a signal peptide directing secretion. The active-site Proton acceptor is the His-38. 4 disulfides stabilise this stretch: Cys-47–Cys-106, Cys-61–Cys-118, Cys-79–Cys-133, and Cys-86–Cys-94. Substrate is bound at residue 62-66 (KDINT). N-linked (GlcNAc...) asparagine glycans are attached at residues Asn-88 and Asn-107. Residue His-150 is the Proton donor of the active site.

Belongs to the pancreatic ribonuclease family.

It is found in the cytoplasmic granule. In terms of biological role, cytotoxin and helminthotoxin with ribonuclease activity. Possesses a wide variety of biological activities. This is Eosinophil cationic protein (Rnase3) from Rattus norvegicus (Rat).